An 84-amino-acid chain; its full sequence is Cell division topological specificity factor (84 aa).

It belongs to the MinE family.

Functionally, prevents the cell division inhibition by proteins MinC and MinD at internal division sites while permitting inhibition at polar sites. This ensures cell division at the proper site by restricting the formation of a division septum at the midpoint of the long axis of the cell. The sequence is that of Cell division topological specificity factor from Hydrogenovibrio crunogenus (strain DSM 25203 / XCL-2) (Thiomicrospira crunogena).